The chain runs to 419 residues: Tol-Pal system protein TolB (419 aa).

The signal sequence occupies residues 1-19 (MFNRIISLFLLLFTGQVIA).

This sequence belongs to the TolB family. As to quaternary structure, the Tol-Pal system is composed of five core proteins: the inner membrane proteins TolA, TolQ and TolR, the periplasmic protein TolB and the outer membrane protein Pal. They form a network linking the inner and outer membranes and the peptidoglycan layer.

The protein localises to the periplasm. Its function is as follows. Part of the Tol-Pal system, which plays a role in outer membrane invagination during cell division and is important for maintaining outer membrane integrity. The protein is Tol-Pal system protein TolB of Legionella pneumophila (strain Corby).